Reading from the N-terminus, the 825-residue chain is MEFIDYDTFGVSDTISTSAGDGALPEPVAILNLNALSFEKPDEHNEINLSELLVDRGTTDGGKNVNLNAKMSNYAKLSMESLHISGTSDNLSVNTLPSYIPDGNKESLDISKLVFQQKNQSLEATNMILNKKLSKILNDYSFSNYQSTSYLRKSLNSLEENKVALSLDENKLTNPGYIGTLARKTLKSDVETELLKEHLTVLEEFRPIVRKIKKLSSSIENIQNLGTSMLKESKENATGTEEPMFDRIKSLRKDIDNLKLKKELLLSIRDQYTLTQVEDDKISNGSVDEELFEIINKVMRIKEKTVFMLGLENPNAGKSLMHEVNNILQRLNRKLFNHLLDILYIFESGTNNVNEKFLSPNEKGVQTFQRSLIYLSNDLEYFNEFLKRVTSLRSKTVLDQFLSQFDFNSKDANPIMLSAYDPLRYIGDILANVYSLIANEADFVRSLFNFQEMQMENTPVSIIQKKDEFLDGLDSKLLNEIIQSLSNTCRIRIGQIIKFEDNPITNFEIVKLLELYKMMFERKGIKSNSSLINNLSALGVVSQEKLIECYSNFVNEIEKTTYVATEDFLPPEWLSDYLVKITDLFEAYEQHGGRESDTNEIIITDTFLEKVIKEPIENTLLKQLKEGFPLAKKEEQARTSLYTVQINCFDLIKSRIQPFASVIFSKDGEKNDVLKWISDKSEEVINQMLELQKKILFDKTGLGMYNNLLNMIFPISSVKDDLDLDMYYSLSENSLMNLDSINTNVHEKLNDYVPIALTDMQGNLLFKLTSPVIADKICDSCFSTLSEFYITFRKTLMHIYPEEEIKIKEILNFSEEEFKTLVGIE.

It belongs to the COG6 family.

It localises to the golgi apparatus membrane. Its function is as follows. Acts as a component of the peripheral membrane COG complex that is involved in intra-Golgi protein trafficking. COG is located at the cis-Golgi, and regulates tethering of retrograde intra-Golgi vesicles and possibly a number of other membrane trafficking events. The protein is Conserved oligomeric Golgi complex subunit 6 (COG6) of Vanderwaltozyma polyspora (strain ATCC 22028 / DSM 70294 / BCRC 21397 / CBS 2163 / NBRC 10782 / NRRL Y-8283 / UCD 57-17) (Kluyveromyces polysporus).